The primary structure comprises 180 residues: Crossover junction endodeoxyribonuclease RuvC (180 aa).

Active-site residues include D7, E66, and D138. Mg(2+)-binding residues include D7, E66, and D138.

Belongs to the RuvC family. As to quaternary structure, homodimer which binds Holliday junction (HJ) DNA. The HJ becomes 2-fold symmetrical on binding to RuvC with unstacked arms; it has a different conformation from HJ DNA in complex with RuvA. In the full resolvosome a probable DNA-RuvA(4)-RuvB(12)-RuvC(2) complex forms which resolves the HJ. The cofactor is Mg(2+).

The protein resides in the cytoplasm. It catalyses the reaction Endonucleolytic cleavage at a junction such as a reciprocal single-stranded crossover between two homologous DNA duplexes (Holliday junction).. Its function is as follows. The RuvA-RuvB-RuvC complex processes Holliday junction (HJ) DNA during genetic recombination and DNA repair. Endonuclease that resolves HJ intermediates. Cleaves cruciform DNA by making single-stranded nicks across the HJ at symmetrical positions within the homologous arms, yielding a 5'-phosphate and a 3'-hydroxyl group; requires a central core of homology in the junction. The consensus cleavage sequence is 5'-(A/T)TT(C/G)-3'. Cleavage occurs on the 3'-side of the TT dinucleotide at the point of strand exchange. HJ branch migration catalyzed by RuvA-RuvB allows RuvC to scan DNA until it finds its consensus sequence, where it cleaves and resolves the cruciform DNA. This chain is Crossover junction endodeoxyribonuclease RuvC, found in Paraburkholderia phytofirmans (strain DSM 17436 / LMG 22146 / PsJN) (Burkholderia phytofirmans).